A 145-amino-acid chain; its full sequence is Large ribosomal subunit protein eL32 (145 aa).

This sequence belongs to the eukaryotic ribosomal protein eL32 family.

The sequence is that of Large ribosomal subunit protein eL32 (rpl32e) from Aeropyrum pernix (strain ATCC 700893 / DSM 11879 / JCM 9820 / NBRC 100138 / K1).